A 189-amino-acid polypeptide reads, in one-letter code: GTP cyclohydrolase 1 (189 aa).

Residues Cys-78, His-81, and Cys-150 each coordinate Zn(2+).

This sequence belongs to the GTP cyclohydrolase I family. Homomer.

It carries out the reaction GTP + H2O = 7,8-dihydroneopterin 3'-triphosphate + formate + H(+). The protein operates within cofactor biosynthesis; 7,8-dihydroneopterin triphosphate biosynthesis; 7,8-dihydroneopterin triphosphate from GTP: step 1/1. This Bacillus cytotoxicus (strain DSM 22905 / CIP 110041 / 391-98 / NVH 391-98) protein is GTP cyclohydrolase 1.